The chain runs to 208 residues: 3-isopropylmalate dehydratase small subunit (208 aa).

The protein belongs to the LeuD family. LeuD type 1 subfamily. As to quaternary structure, heterodimer of LeuC and LeuD.

The catalysed reaction is (2R,3S)-3-isopropylmalate = (2S)-2-isopropylmalate. Its pathway is amino-acid biosynthesis; L-leucine biosynthesis; L-leucine from 3-methyl-2-oxobutanoate: step 2/4. Catalyzes the isomerization between 2-isopropylmalate and 3-isopropylmalate, via the formation of 2-isopropylmaleate. In Buchnera aphidicola subsp. Diuraphis noxia, this protein is 3-isopropylmalate dehydratase small subunit (leuD).